Here is a 254-residue protein sequence, read N- to C-terminus: MRKPLVGINMKNYINTRAQTSEWLEATIPLLKNFSDVDTFIFPSMGTLETTANLLAGTSFGFGPQNMAPEKSGPLTGEFSVESIIDLNANYVEIGHAERKNLFHEKTSEIAKKIKLALDEKITPVVCVGEEVRANDTNELKNALKKQIEALFQTINLAQWENVVLAYEPEWAIGKASSAETNYIESAHQALREIIRELGGDETLVRIIYGGSVSKENAAEIVRQKNVDGLFVGRFGHKPQNFADIVSIVSKTKG.

9–11 (NMK) contacts substrate. His-96 serves as the catalytic Electrophile. Residue Glu-168 is the Proton acceptor of the active site. Positions 174 and 212 each coordinate substrate.

Belongs to the triosephosphate isomerase family. In terms of assembly, homodimer.

The protein localises to the cytoplasm. The catalysed reaction is D-glyceraldehyde 3-phosphate = dihydroxyacetone phosphate. Its pathway is carbohydrate biosynthesis; gluconeogenesis. The protein operates within carbohydrate degradation; glycolysis; D-glyceraldehyde 3-phosphate from glycerone phosphate: step 1/1. Its function is as follows. Involved in the gluconeogenesis. Catalyzes stereospecifically the conversion of dihydroxyacetone phosphate (DHAP) to D-glyceraldehyde-3-phosphate (G3P). This is Probable triosephosphate isomerase 2 from Listeria monocytogenes serotype 4b (strain F2365).